A 31-amino-acid polypeptide reads, in one-letter code: Chassatide C6 (31 aa).

The cyclopeptide (Gly-Asn) cross-link spans 1–31; the sequence is GVIPCGESCVFIPCISSVIGCSCKNKVCYRN. Disulfide bonds link Cys-5/Cys-21, Cys-9/Cys-23, and Cys-14/Cys-28.

This is a cyclic peptide. Expressed in fruit, pedicel, root and stem but not in leaf (at protein level).

Its function is as follows. Probably participates in a plant defense mechanism. The sequence is that of Chassatide C6 from Chassalia chartacea (Chassalia curviflora).